The following is a 252-amino-acid chain: Imidazole glycerol phosphate synthase subunit HisF (252 aa).

Residues Asp11 and Asp130 contribute to the active site.

The protein belongs to the HisA/HisF family. As to quaternary structure, heterodimer of HisH and HisF.

Its subcellular location is the cytoplasm. The enzyme catalyses 5-[(5-phospho-1-deoxy-D-ribulos-1-ylimino)methylamino]-1-(5-phospho-beta-D-ribosyl)imidazole-4-carboxamide + L-glutamine = D-erythro-1-(imidazol-4-yl)glycerol 3-phosphate + 5-amino-1-(5-phospho-beta-D-ribosyl)imidazole-4-carboxamide + L-glutamate + H(+). It functions in the pathway amino-acid biosynthesis; L-histidine biosynthesis; L-histidine from 5-phospho-alpha-D-ribose 1-diphosphate: step 5/9. Functionally, IGPS catalyzes the conversion of PRFAR and glutamine to IGP, AICAR and glutamate. The HisF subunit catalyzes the cyclization activity that produces IGP and AICAR from PRFAR using the ammonia provided by the HisH subunit. This Staphylococcus epidermidis (strain ATCC 12228 / FDA PCI 1200) protein is Imidazole glycerol phosphate synthase subunit HisF.